Reading from the N-terminus, the 211-residue chain is Protein-L-isoaspartate O-methyltransferase 1 (211 aa).

Ser-62 is an active-site residue.

Belongs to the methyltransferase superfamily. L-isoaspartyl/D-aspartyl protein methyltransferase family.

It localises to the cytoplasm. It catalyses the reaction [protein]-L-isoaspartate + S-adenosyl-L-methionine = [protein]-L-isoaspartate alpha-methyl ester + S-adenosyl-L-homocysteine. In terms of biological role, catalyzes the methyl esterification of L-isoaspartyl residues in peptides and proteins that result from spontaneous decomposition of normal L-aspartyl and L-asparaginyl residues. It plays a role in the repair and/or degradation of damaged proteins. This is Protein-L-isoaspartate O-methyltransferase 1 from Shewanella sediminis (strain HAW-EB3).